The following is a 21-amino-acid chain: Ocellatin-4 (21 aa).

An Isoleucine amide modification is found at I21.

As to expression, expressed by the skin dorsal glands.

The protein localises to the secreted. Has hemolytic activity against human erythrocytes (HC50=14.3 uM). Has antibacterial activity against the Gram-positive bacterium S.aureus ATCC 25923 (MIC=64 uM) and the Gram-negative bacterium E.coli ATCC 25922 (MIC=64 uM). The sequence is that of Ocellatin-4 from Leptodactylus ocellatus (Argus frog).